A 107-amino-acid chain; its full sequence is Large ribosomal subunit protein uL24 (107 aa).

This sequence belongs to the universal ribosomal protein uL24 family. Part of the 50S ribosomal subunit.

In terms of biological role, one of two assembly initiator proteins, it binds directly to the 5'-end of the 23S rRNA, where it nucleates assembly of the 50S subunit. Its function is as follows. One of the proteins that surrounds the polypeptide exit tunnel on the outside of the subunit. The protein is Large ribosomal subunit protein uL24 of Neisseria gonorrhoeae (strain ATCC 700825 / FA 1090).